The sequence spans 462 residues: Protein MOS2 (462 aa).

Low complexity predominate over residues 1–10 (MKLSFSLPSK). Positions 1–32 (MKLSFSLPSKSKPKVTATTADGNNAVDDGTSK) are disordered. In terms of domain architecture, G-patch spans 156 to 202 (VDGFGAALMAGYGWKPGKGIGKNAKEDVEIKEYKKWTAKEGLGFDPD). One can recognise a KOW 1 domain in the interval 231–258 (VFFVGKEVRIIAGRDVGLKGKIVEKPGS). Basic and acidic residues predominate over residues 301-336 (DREKDKKTSGRGRGAERGSRSEVRASEKQDRGQTRE). The tract at residues 301 to 340 (DREKDKKTSGRGRGAERGSRSEVRASEKQDRGQTRERKVK) is disordered. A KOW 2 domain is found at 401–428 (LPRRGGPVLVLSGKHKGVYGNLVEKDLD).

Belongs to the MOS2 family.

It is found in the nucleus. Required for innate and induced resistance to pathogens such as compatible and incompatible isolates of P.syringae and P.parasitica. This is Protein MOS2 (MOS2) from Arabidopsis thaliana (Mouse-ear cress).